The primary structure comprises 496 residues: Lysine--tRNA ligase (496 aa).

The Mg(2+) site is built by glutamate 409 and glutamate 416.

This sequence belongs to the class-II aminoacyl-tRNA synthetase family. Homodimer. The cofactor is Mg(2+).

It localises to the cytoplasm. It catalyses the reaction tRNA(Lys) + L-lysine + ATP = L-lysyl-tRNA(Lys) + AMP + diphosphate. The chain is Lysine--tRNA ligase from Streptococcus suis (strain 05ZYH33).